We begin with the raw amino-acid sequence, 293 residues long: ESX-3 secretion-associated protein EspG3 (293 aa).

The protein belongs to the EspG family.

Its subcellular location is the cytoplasm. This Mycolicibacterium smegmatis (strain ATCC 700084 / mc(2)155) (Mycobacterium smegmatis) protein is ESX-3 secretion-associated protein EspG3.